A 216-amino-acid chain; its full sequence is Fibroblast growth factor 19 (216 aa).

A signal peptide spans 1-24 (MRSGCVVVHVWILAGLWLAVAGRP). 2 disulfides stabilise this stretch: cysteine 58-cysteine 70 and cysteine 102-cysteine 120.

It belongs to the heparin-binding growth factors family. Interacts with FGFR1, FGFR2, FGFR3 and FGFR4. Affinity between fibroblast growth factors (FGFs) and their receptors is increased by KL, KLB and heparan sulfate glycosaminoglycans that function as coreceptors. Interacts with KL; this interaction is direct. Interacts with KLB; this interaction is direct. Interacts with FGFR4 in the presence of heparin, KL or KLB. Interacts with MALRD1. Expressed in fetal brain, cartilage, retina, and adult gall bladder.

Its subcellular location is the secreted. Its function is as follows. Involved in the suppression of bile acid biosynthesis through down-regulation of CYP7A1 expression, following positive regulation of the JNK and ERK1/2 cascades. Stimulates glucose uptake in adipocytes. Activity requires the presence of KLB and FGFR4. The protein is Fibroblast growth factor 19 (FGF19) of Homo sapiens (Human).